Here is a 295-residue protein sequence, read N- to C-terminus: MNNSMTEARNEATMHLDEMSIIQALETMNAEDQKVPQQIHDILPKLAEVIKVTTEQFKQGGRIIYIGAGTSGRLGVLDAAECVPTFNTSTNEVIGLIAGGQRAMTVAVEGAEDSESLAREDLKHIHLNEKDVVIGIAASGSTPYVMGGLKCATEIGAHTVAISCNTNTKISDLAQYPIEVNVGPEVLTGSTRLKSGTAQKLILNMISTITMVGVGKVYDNLMVDVKATNQKLIDRSIRIIQDICDISYNQAQSLYESADQNLKVAVVMHLCDINKSEAVTRLNDNNHIIKKAIQN.

One can recognise an SIS domain in the interval 53-216 (TTEQFKQGGR…STITMVGVGK (164 aa)). Glu-81 serves as the catalytic Proton donor. Glu-112 is an active-site residue.

It belongs to the GCKR-like family. MurNAc-6-P etherase subfamily. In terms of assembly, homodimer.

It carries out the reaction N-acetyl-D-muramate 6-phosphate + H2O = N-acetyl-D-glucosamine 6-phosphate + (R)-lactate. It functions in the pathway amino-sugar metabolism; N-acetylmuramate degradation. Specifically catalyzes the cleavage of the D-lactyl ether substituent of MurNAc 6-phosphate, producing GlcNAc 6-phosphate and D-lactate. This is N-acetylmuramic acid 6-phosphate etherase from Staphylococcus saprophyticus subsp. saprophyticus (strain ATCC 15305 / DSM 20229 / NCIMB 8711 / NCTC 7292 / S-41).